The primary structure comprises 100 residues: NADH-quinone oxidoreductase subunit K (100 aa).

3 helical membrane-spanning segments follow: residues 4–24 (LQHGLILAAVLFVLGFTCLVL), 28–48 (LLFMLIGLEIMINSAALAFVV), and 60–80 (IMYILAISLAAAEASIGLALL).

This sequence belongs to the complex I subunit 4L family. NDH-1 is composed of 13 different subunits. Subunits NuoA, H, J, K, L, M, N constitute the membrane sector of the complex.

The protein localises to the cell inner membrane. It catalyses the reaction a quinone + NADH + 5 H(+)(in) = a quinol + NAD(+) + 4 H(+)(out). Its function is as follows. NDH-1 shuttles electrons from NADH, via FMN and iron-sulfur (Fe-S) centers, to quinones in the respiratory chain. The immediate electron acceptor for the enzyme in this species is believed to be ubiquinone. Couples the redox reaction to proton translocation (for every two electrons transferred, four hydrogen ions are translocated across the cytoplasmic membrane), and thus conserves the redox energy in a proton gradient. The chain is NADH-quinone oxidoreductase subunit K from Proteus mirabilis (strain HI4320).